The following is a 264-amino-acid chain: Small ribosomal subunit protein uS3 (264 aa).

The KH type-2 domain occupies 39–107 (VRDFLKKKLK…PVHVNIEEIR (69 aa)). Positions 211–264 (NDAPVVEEPQDDRRRRPGRPEGRRREGEGRPGGNRRGGAGAGRRAAPGDAKSGE) are disordered. Residues 221 to 239 (DDRRRRPGRPEGRRREGEG) are compositionally biased toward basic and acidic residues. Over residues 240 to 251 (RPGGNRRGGAGA) the composition is skewed to gly residues.

This sequence belongs to the universal ribosomal protein uS3 family. In terms of assembly, part of the 30S ribosomal subunit. Forms a tight complex with proteins S10 and S14.

In terms of biological role, binds the lower part of the 30S subunit head. Binds mRNA in the 70S ribosome, positioning it for translation. In Cupriavidus pinatubonensis (strain JMP 134 / LMG 1197) (Cupriavidus necator (strain JMP 134)), this protein is Small ribosomal subunit protein uS3.